Consider the following 697-residue polypeptide: Elongation factor G 2 (697 aa).

Residues 6–281 (TNYRNFGIFA…AVVDFLPNPT (276 aa)) form the tr-type G domain. Residues 15–22 (AHVDAGKT), 79–83 (DTPGH), and 133–136 (NKLD) each bind GTP.

The protein belongs to the TRAFAC class translation factor GTPase superfamily. Classic translation factor GTPase family. EF-G/EF-2 subfamily.

Its subcellular location is the cytoplasm. Functionally, catalyzes the GTP-dependent ribosomal translocation step during translation elongation. During this step, the ribosome changes from the pre-translocational (PRE) to the post-translocational (POST) state as the newly formed A-site-bound peptidyl-tRNA and P-site-bound deacylated tRNA move to the P and E sites, respectively. Catalyzes the coordinated movement of the two tRNA molecules, the mRNA and conformational changes in the ribosome. This chain is Elongation factor G 2, found in Trichodesmium erythraeum (strain IMS101).